Here is a 185-residue protein sequence, read N- to C-terminus: Hypoxanthine/guanine phosphoribosyltransferase (185 aa).

Belongs to the purine/pyrimidine phosphoribosyltransferase family. Archaeal HPRT subfamily. As to quaternary structure, homodimer.

The protein resides in the cytoplasm. It carries out the reaction IMP + diphosphate = hypoxanthine + 5-phospho-alpha-D-ribose 1-diphosphate. The catalysed reaction is GMP + diphosphate = guanine + 5-phospho-alpha-D-ribose 1-diphosphate. It participates in purine metabolism; IMP biosynthesis via salvage pathway; IMP from hypoxanthine: step 1/1. Functionally, catalyzes a salvage reaction resulting in the formation of IMP that is energically less costly than de novo synthesis. The protein is Hypoxanthine/guanine phosphoribosyltransferase of Methanococcus maripaludis (strain C5 / ATCC BAA-1333).